The primary structure comprises 141 residues: Cholinesterase (141 aa).

The N-linked (GlcNAc...) asparagine glycan is linked to Asn39. 49-50 (GG) contributes to the substrate binding site. Catalysis depends on Ser131, which acts as the Acyl-ester intermediate. The residue at position 131 (Ser131) is a Phosphoserine.

This sequence belongs to the type-B carboxylesterase/lipase family. As to quaternary structure, homotetramer; disulfide-linked. Dimer of dimers. Present in most cells except erythrocytes.

The protein localises to the secreted. It catalyses the reaction an acylcholine + H2O = a carboxylate + choline + H(+). Its function is as follows. Esterase with broad substrate specificity. Contributes to the inactivation of the neurotransmitter acetylcholine. Can degrade neurotoxic organophosphate esters. In Canis lupus familiaris (Dog), this protein is Cholinesterase (BCHE).